A 434-amino-acid chain; its full sequence is Nicotinate phosphoribosyltransferase (434 aa).

H242 is subject to Phosphohistidine; by autocatalysis.

This sequence belongs to the NAPRTase family. In terms of processing, transiently phosphorylated on a His residue during the reaction cycle. Phosphorylation strongly increases the affinity for substrates and increases the rate of nicotinate D-ribonucleotide production. Dephosphorylation regenerates the low-affinity form of the enzyme, leading to product release.

It carries out the reaction nicotinate + 5-phospho-alpha-D-ribose 1-diphosphate + ATP + H2O = nicotinate beta-D-ribonucleotide + ADP + phosphate + diphosphate. The protein operates within cofactor biosynthesis; NAD(+) biosynthesis; nicotinate D-ribonucleotide from nicotinate: step 1/1. Catalyzes the synthesis of beta-nicotinate D-ribonucleotide from nicotinate and 5-phospho-D-ribose 1-phosphate at the expense of ATP. The protein is Nicotinate phosphoribosyltransferase of Agrobacterium fabrum (strain C58 / ATCC 33970) (Agrobacterium tumefaciens (strain C58)).